Here is a 523-residue protein sequence, read N- to C-terminus: NADH-ubiquinone oxidoreductase chain 2 (523 aa).

The next 14 membrane-spanning stretches (helical) occupy residues 3 to 23, 30 to 50, 62 to 82, 110 to 130, 135 to 155, 170 to 190, 212 to 232, 246 to 266, 281 to 301, 306 to 326, 333 to 353, 386 to 406, 419 to 439, and 490 to 510; these read LFGVLTMILAIALFSLRIPAI, IILLLFSALLSYNSLYMNNIG, VTTITQSIDVFIYLLGALVLL, SVLAEYPLIALFSVLGMSSLI, LISMFLSIELQSFAVYILATI, FLLGSLSSALILLGSSLLYSF, IEISVLLIMVGLLFKVSAAPF, VVTTWLTTMPKIAFLVFILEF, LLLISSLLSLLIGTIGGLAQY, LLTYSTISHVGFLLLALAINN, FLFYLIQYSLTNINVFFILVA, GLSLAICLFSMAGIPPLVGFF, GNFFLAFVAILVSVVSAAYYL, and LVIATITLLLIFFIINPTPLL.

The protein belongs to the complex I subunit 2 family.

It is found in the mitochondrion inner membrane. It carries out the reaction a ubiquinone + NADH + 5 H(+)(in) = a ubiquinol + NAD(+) + 4 H(+)(out). Core subunit of the mitochondrial membrane respiratory chain NADH dehydrogenase (Complex I) that is believed to belong to the minimal assembly required for catalysis. Complex I functions in the transfer of electrons from NADH to the respiratory chain. The immediate electron acceptor for the enzyme is believed to be ubiquinone. This is NADH-ubiquinone oxidoreductase chain 2 from Rhizopus oryzae (Mucormycosis agent).